The primary structure comprises 320 residues: Ferrochelatase (320 aa).

The Fe cation site is built by histidine 194 and glutamate 275.

This sequence belongs to the ferrochelatase family. Monomer.

It is found in the cytoplasm. It catalyses the reaction heme b + 2 H(+) = protoporphyrin IX + Fe(2+). The protein operates within porphyrin-containing compound metabolism; protoheme biosynthesis; protoheme from protoporphyrin-IX: step 1/1. In terms of biological role, catalyzes the ferrous insertion into protoporphyrin IX. The protein is Ferrochelatase of Shigella sonnei (strain Ss046).